Here is a 689-residue protein sequence, read N- to C-terminus: Histone-lysine N-methyltransferase MEDEA (689 aa).

3 disordered regions span residues 1–20, 51–73, and 169–188; these read MEKE…LNQI, HQSF…KSLL, and ELSS…EIKK. Residues 1–109 form an interaction with FIE region; sequence MEKENHEDDG…DEDQDYALEE (109 aa). Residues 171–184 are compositionally biased toward acidic residues; that stretch reads SSEEDEEDEEEDEE. In terms of domain architecture, SANT spans 339 to 389; the sequence is NNTMWTPVEKDLYLKGIEIFGRNSCDVALNILRGLKTCLEIYNYMREQDQC. Positions 428-532 constitute a CXC domain; that stretch reads RYPPALKKTT…TLGETPVQIQ (105 aa). Residues 544–659 form the SET domain; sequence KKILIGKSDV…EGEELFFDYC (116 aa). The disordered stretch occupies residues 666–689; sequence DWSRGREPRKTGASKRSKEARPAR.

It belongs to the class V-like SAM-binding methyltransferase superfamily. Histone-lysine methyltransferase family. EZ subfamily. In terms of assembly, interacts directly with FIE via its N-terminal domain. These two proteins are probably indirectly associated with FIS2. In plants, PcG complexes are probably composed of a member of the EZ family (CLF or MEA), FIE, and a member of the VEFS family (FIS2, VRN2 or EMF2). Interacts with TAF13. Expressed in unpollinated siliques that contain maturing gametophytes. Not expressed at early stages of floral development during early megagametogenesis.

The protein localises to the nucleus. It catalyses the reaction L-lysyl(27)-[histone H3] + 3 S-adenosyl-L-methionine = N(6),N(6),N(6)-trimethyl-L-lysyl(27)-[histone H3] + 3 S-adenosyl-L-homocysteine + 3 H(+). Its function is as follows. Polycomb group (PcG) protein. Catalytic subunit of some PcG multiprotein complex, which methylates 'Lys-27' of histone H3, leading to transcriptional repression of the affected target genes. Required to prevent the proliferation of the central cell of the female gametophyte by repressing target genes before fertilization. After fertilization, it probably also regulates the embryo and endosperm proliferation and anteroposterior organization during seed development. PcG proteins act by forming multiprotein complexes, which are required to maintain the transcriptionally repressive state of homeotic genes throughout development. PcG proteins are not required to initiate repression, but to maintain it during later stages of development. Interacts with the promoter and repress the transcription of genes such as PHE1 and PHE2, that are paternally active and maternally silenced genes. In Arabidopsis thaliana (Mouse-ear cress), this protein is Histone-lysine N-methyltransferase MEDEA (MEA).